The sequence spans 491 residues: MKYHDLRDFLTLLEQQGELKRITLPVDPHLEITEIADRTLRAGGPALLFENPKGYTMPVLCNLFGTPRRVALGMGQEDVSSLREVGKLLAFLKEPEPPKGFRDLFDKLPQFKQVLNMPTKRLRGAPCQQKIIQGDDVDLNKIPIMTCWPEDAAPLITWGLTVTRGPHKERQNLGIYRQQLIGKNKLIMRWLSHRGGALDFQEWCAARPGERFPVSVALGADPATILGAVTPVPDTLSEYAFAGLLRGTKTEVVKCVSNDLEVPASAEIVLEGYIEAGEMAPEGPYGDHTGYYNEVDSFPVFTVTHITQREDAIYHSTYTGRPPDEPAVLGVALNEVFVPILQKQFPEIVDFYLPPEGCSYRLAVVTMKKQYAGHAKRVMMGVWSFLRQFMYTKFVIVCDDDVNARDWNDVIWAITTRMDPARDTVLVENTPIDYLDFASPVSGLGSKMGLDATNKWPGETQREWGRPIKKDPAVTARIDAIWDELAIFKQQ.

Residue asparagine 172 coordinates Mn(2+). Prenylated FMN-binding positions include isoleucine 175–arginine 177, arginine 189–leucine 191, and arginine 194–glycine 195. Glutamate 238 provides a ligand contact to Mn(2+). The active-site Proton donor is the aspartate 287.

The protein belongs to the UbiD family. In terms of assembly, homohexamer. It depends on prenylated FMN as a cofactor. Requires Mn(2+) as cofactor.

It localises to the cell membrane. It carries out the reaction a 4-hydroxy-3-(all-trans-polyprenyl)benzoate + H(+) = a 2-(all-trans-polyprenyl)phenol + CO2. It functions in the pathway cofactor biosynthesis; ubiquinone biosynthesis. Catalyzes the decarboxylation of 3-octaprenyl-4-hydroxy benzoate to 2-octaprenylphenol, an intermediate step in ubiquinone biosynthesis. This is 3-octaprenyl-4-hydroxybenzoate carboxy-lyase from Klebsiella pneumoniae subsp. pneumoniae (strain ATCC 700721 / MGH 78578).